Here is a 431-residue protein sequence, read N- to C-terminus: BEL1-like homeodomain protein 5 (431 aa).

Residues 80–96 (PIYLKAAQELLNEIVNV) form an SR/KY domain region. The BELL domain stretch occupies residues 128-199 (GVAALQMKKA…AVKDMISLQI (72 aa)). A DNA-binding region (homeobox) is located at residues 228–290 (AWRPQRGLPE…NARVRMWKPL (63 aa)). A compositionally biased stretch (basic and acidic residues) spans 302–312 (EESRKGSDRYS). The disordered stretch occupies residues 302–333 (EESRKGSDRYSTKGSSSKQPYNNTTSNESSNT). The segment covering 313-322 (TKGSSSKQPY) has biased composition (polar residues). Residues 323–333 (NNTTSNESSNT) are compositionally biased toward low complexity.

Belongs to the TALE/BELL homeobox family. In terms of assembly, may form heterodimeric complexes with TALE/KNOX proteins. Interacts with OFP1.

Its subcellular location is the nucleus. The protein is BEL1-like homeodomain protein 5 (BLH5) of Arabidopsis thaliana (Mouse-ear cress).